The following is a 122-amino-acid chain: Large ribosomal subunit protein uL18 (122 aa).

It belongs to the universal ribosomal protein uL18 family. In terms of assembly, part of the 50S ribosomal subunit; part of the 5S rRNA/L5/L18/L25 subcomplex. Contacts the 5S and 23S rRNAs.

This is one of the proteins that bind and probably mediate the attachment of the 5S RNA into the large ribosomal subunit, where it forms part of the central protuberance. The chain is Large ribosomal subunit protein uL18 from Syntrophotalea carbinolica (strain DSM 2380 / NBRC 103641 / GraBd1) (Pelobacter carbinolicus).